Reading from the N-terminus, the 560-residue chain is Putative transport protein VV1438 (560 aa).

5 helical membrane-spanning segments follow: residues 5–25, 37–57, 66–86, 91–111, and 164–184; these read VVLLLQQNPILLIFVVLAIGL, LGNSIGVLITSLIMGHLGFSF, FMLFIYCVGIEAGPNFFGIFF, HYFTLSMVVLVTAVSISYFAS, and VGYAMAYLVGLISMIMFAKLL. RCK C-terminal domains follow at residues 203-292 and 293-376; these read RGLG…FRNG and KEVF…RIGF. 6 helical membrane-spanning segments follow: residues 386 to 406, 409 to 429, 443 to 463, 478 to 498, 506 to 526, and 539 to 559; these read LLAFCSFFILGIMFGLVTMTF, VSFSLGNAVGLLLSGITLGFL, ALNMVKDLGLMIFMVGIGLSA, IIGIAFLVSVVPVFFAYLVGA, ALLFGAIIGARTCAPAMDIVN, and AGTYAIANILMTLAGTILIIL.

The protein belongs to the AAE transporter (TC 2.A.81) family. YbjL subfamily.

The protein resides in the cell membrane. The polypeptide is Putative transport protein VV1438 (Vibrio vulnificus (strain YJ016)).